The primary structure comprises 146 residues: Putative transposon Ty5-1 protein YCL075W (146 aa).

The sequence is that of Putative transposon Ty5-1 protein YCL075W (TY5B) from Saccharomyces cerevisiae (strain ATCC 204508 / S288c) (Baker's yeast).